The primary structure comprises 627 residues: Transketolase-like protein 2 (627 aa).

His39 contributes to the substrate binding site. Thiamine diphosphate-binding positions include Ser42, His79, and Gly125–Leu127. Asp157 serves as a coordination point for Mg(2+). Gly158 and Asn187 together coordinate thiamine diphosphate. The Mg(2+) site is built by Asn187 and Leu189. Thiamine diphosphate is bound by residues Lys249 and His263. His263, Arg323, and Ser350 together coordinate substrate. 2 residues coordinate thiamine diphosphate: Glu371 and Phe397. Residue Glu371 is the Proton donor of the active site. Positions 421 and 429 each coordinate substrate. Thiamine diphosphate is bound at residue Gln433. Arg479 contributes to the substrate binding site.

Belongs to the transketolase family. As to quaternary structure, homodimer. Requires Mg(2+) as cofactor. The cofactor is Ca(2+). It depends on Mn(2+) as a cofactor. Co(2+) serves as cofactor. Thiamine diphosphate is required as a cofactor.

It catalyses the reaction D-sedoheptulose 7-phosphate + D-glyceraldehyde 3-phosphate = aldehydo-D-ribose 5-phosphate + D-xylulose 5-phosphate. Plays an essential role in total transketolase activity and cell proliferation in cancer cells; after transfection with anti-TKTL1 siRNA, total transketolase activity dramatically decreases and proliferation was significantly inhibited in cancer cells. Plays a pivotal role in carcinogenesis. This Mus musculus (Mouse) protein is Transketolase-like protein 2 (Tktl2).